A 460-amino-acid chain; its full sequence is Transcription factor AP-2-beta (460 aa).

A Glycyl lysine isopeptide (Lys-Gly) (interchain with G-Cter in SUMO) cross-link involves residue K21. Positions 30-139 are disordered; sequence HDGVPSHSSR…PQLSGLDPRR (110 aa). The segment covering 35–51 has biased composition (polar residues); sequence SHSSRLSQLGSVSQGPY. Residues 121 to 132 are compositionally biased toward low complexity; it reads LLPQPRAALPQL. At S258 the chain carries Phosphoserine; by PKA. Positions 435–460 are disordered; sequence NTTTNRHTSGEGPGSKTGDKEEKHRK. The segment covering 451–460 has biased composition (basic and acidic residues); it reads TGDKEEKHRK.

The protein belongs to the AP-2 family. As to quaternary structure, binds DNA as a dimer. Can form homodimers or heterodimers with other AP-2 family members. Interacts with CITED4. Interacts with UBE2I. Interacts with KCTD1; this interaction represses transcription activation. Interacts with CITED2 (via C-terminus); the interaction stimulates TFAP2B-transcriptional activity. Post-translationally, sumoylated on Lys-21; which inhibits transcriptional activity.

The protein resides in the nucleus. Sequence-specific DNA-binding protein that interacts with inducible viral and cellular enhancer elements to regulate transcription of selected genes. AP-2 factors bind to the consensus sequence 5'-GCCNNNGGC-3' and activate genes involved in a large spectrum of important biological functions including proper eye, face, body wall, limb and neural tube development. They also suppress a number of genes including MCAM/MUC18, C/EBP alpha and MYC. AP-2-beta appears to be required for normal face and limb development and for proper terminal differentiation and function of renal tubular epithelia. This Canis lupus familiaris (Dog) protein is Transcription factor AP-2-beta (TFAP2B).